The primary structure comprises 903 residues: DNA transposase THAP9 (903 aa).

The segment at 1 to 89 (MTRSCSAVGC…LKKGAVPSVS (89 aa)) adopts a THAP-type zinc-finger fold. The HCFC1-binding motif (HBM) motif lies at 123 to 126 (DHNY).

Active transposase that specifically recognizes the bipartite 5'-TXXGGGX(A/T)-3' consensus motif and mediates transposition. The protein is DNA transposase THAP9 (THAP9) of Homo sapiens (Human).